Here is a 65-residue protein sequence, read N- to C-terminus: Large ribosomal subunit protein bL35 (65 aa).

This sequence belongs to the bacterial ribosomal protein bL35 family.

The chain is Large ribosomal subunit protein bL35 from Thermoanaerobacter sp. (strain X514).